Here is a 367-residue protein sequence, read N- to C-terminus: NADH-ubiquinone oxidoreductase chain 1 (367 aa).

10 helical membrane passes run 5-25 (IIISLIEVVLVLVPALLGIAY), 43-63 (PNFVGYYGLLQAFADALKLLL), 74-94 (IILFFLGPVITLIFSLLGYAV), 108-128 (LGIYYILAVSSLATYGILLAG), 152-172 (LVLSSAILLVIMLTGSLNLSV), 179-199 (AIWNIFPLLPVFIIFFIGSVA), 225-245 (AVVFVFFFLAEYGSIVLMCIL), 265-285 (FFYSILFNIGFIDLNFFNIFY), 301-321 (LIYGLTIGLKSSILIFLFIWV), and 336-356 (FCWTVLLPLLFALIVLLPCIL).

It belongs to the complex I subunit 1 family.

The protein resides in the mitochondrion inner membrane. The enzyme catalyses a ubiquinone + NADH + 5 H(+)(in) = a ubiquinol + NAD(+) + 4 H(+)(out). In terms of biological role, core subunit of the mitochondrial membrane respiratory chain NADH dehydrogenase (Complex I) that is believed to belong to the minimal assembly required for catalysis. Complex I functions in the transfer of electrons from NADH to the respiratory chain. The immediate electron acceptor for the enzyme is believed to be ubiquinone. In Podospora anserina (strain S / ATCC MYA-4624 / DSM 980 / FGSC 10383) (Pleurage anserina), this protein is NADH-ubiquinone oxidoreductase chain 1 (ND1).